The sequence spans 271 residues: Ribosomal RNA small subunit methyltransferase A (271 aa).

Leu20, Gly45, Glu66, Asp90, and Asn112 together coordinate S-adenosyl-L-methionine.

It belongs to the class I-like SAM-binding methyltransferase superfamily. rRNA adenine N(6)-methyltransferase family. RsmA subfamily.

It localises to the cytoplasm. It catalyses the reaction adenosine(1518)/adenosine(1519) in 16S rRNA + 4 S-adenosyl-L-methionine = N(6)-dimethyladenosine(1518)/N(6)-dimethyladenosine(1519) in 16S rRNA + 4 S-adenosyl-L-homocysteine + 4 H(+). Functionally, specifically dimethylates two adjacent adenosines (A1518 and A1519) in the loop of a conserved hairpin near the 3'-end of 16S rRNA in the 30S particle. May play a critical role in biogenesis of 30S subunits. The polypeptide is Ribosomal RNA small subunit methyltransferase A (Blochmanniella floridana).